A 188-amino-acid polypeptide reads, in one-letter code: Fructose-1-phosphate phosphatase YqaB (188 aa).

Residue Asp11 is the Nucleophile of the active site. 3 residues coordinate Mg(2+): Asp11, Asp13, and Asp167. 11–13 (DMD) contributes to the substrate binding site.

The protein belongs to the HAD-like hydrolase superfamily. CbbY/CbbZ/Gph/YieH family. Requires Mg(2+) as cofactor. Mn(2+) is required as a cofactor. The cofactor is Co(2+). It depends on Zn(2+) as a cofactor.

In terms of biological role, catalyzes strongly the dephosphorylation of fructose-1-phosphate (Fru1P) and slightly the dephosphorylation of 6-phosphogluconate (6P-Glu). It has low beta-phosphoglucomutase activity. The protein is Fructose-1-phosphate phosphatase YqaB (yqaB) of Escherichia coli (strain K12).